The primary structure comprises 4244 residues: Tenascin-X (4244 aa).

Residues 1–23 (MMPAQYALTSSLVLLVLLSTARA) form the signal peptide. Residues 27–57 (SSRSNVTLPAPRPPPQPGGHTVGAGVGSPSS) are disordered. Asn-31 carries an N-linked (GlcNAc...) asparagine glycan. The region spanning 156 to 168 (CSCEPGWGGPTCS) is the EGF-like 1; incomplete domain. The interval 169–189 (DPTDAEIPPSSPPSASGSCPD) is disordered. 18 consecutive EGF-like domains span residues 183–213 (ASGS…GPSC), 214–244 (GWPS…GPDC), 245–275 (SQRS…GDDC), 276–306 (GMRS…GEDC), 307–337 (GVRS…GEDC), 338–368 (GTRS…GEDC), 369–399 (STRT…GDDC), 400–430 (GVRS…GTDC), 431–461 (GSRA…GEDC), 462–492 (GVRS…GRDC), 493–523 (GTRA…GEDC), 524–554 (GSRR…GEDC), 555–585 (STRS…GEDC), 586–616 (GVRQ…SEDC), 617–647 (SIRT…GPTC), 648–679 (ATRM…EDCG), 684–714 (PASA…GPDC), and 715–746 (AIQT…EDCG). 54 disulfides stabilise this stretch: Cys-187-Cys-197, Cys-191-Cys-202, Cys-204-Cys-213, Cys-218-Cys-228, Cys-222-Cys-233, Cys-235-Cys-244, Cys-249-Cys-259, Cys-253-Cys-264, Cys-266-Cys-275, Cys-280-Cys-290, Cys-284-Cys-295, Cys-297-Cys-306, Cys-311-Cys-321, Cys-315-Cys-326, Cys-328-Cys-337, Cys-342-Cys-352, Cys-346-Cys-357, Cys-359-Cys-368, Cys-373-Cys-383, Cys-377-Cys-388, Cys-390-Cys-399, Cys-404-Cys-414, Cys-408-Cys-419, Cys-421-Cys-430, Cys-435-Cys-445, Cys-439-Cys-450, Cys-452-Cys-461, Cys-466-Cys-476, Cys-470-Cys-481, Cys-483-Cys-492, Cys-497-Cys-507, Cys-501-Cys-512, Cys-514-Cys-523, Cys-528-Cys-538, Cys-532-Cys-543, Cys-545-Cys-554, Cys-559-Cys-569, Cys-563-Cys-574, Cys-576-Cys-585, Cys-590-Cys-600, Cys-594-Cys-605, Cys-607-Cys-616, Cys-621-Cys-631, Cys-625-Cys-636, Cys-638-Cys-647, Cys-652-Cys-662, Cys-656-Cys-667, Cys-669-Cys-678, Cys-688-Cys-698, Cys-692-Cys-703, Cys-705-Cys-714, Cys-719-Cys-729, Cys-723-Cys-734, and Cys-736-Cys-745. The tract at residues 926–956 (TGSSPLGLLGTTDEPPPSGPSTTQGAQAPLL) is disordered. Fibronectin type-III domains are found at residues 959–1051 (RPQE…IMDK), 1064–1153 (RLGE…PQSD), 1161–1249 (HLGN…APER), 1263–1352 (LLGE…PQED), 1374–1468 (LLGE…TPPA), 1476–1572 (RLGE…TEAS), 1574–1669 (PPLE…RGDA), 1674–1764 (PPRL…ARSA), 1778–1868 (LGEE…REET), and 1883–1971 (HLGE…VPEE). The interval 1340–1372 (PESVVAKTAPQEDVDETPSPTELGTEAPESPEE) is disordered. Residues 1666 to 1668 (RGD) carry the Cell attachment site motif. The tract at residues 1752–1777 (PLTADGTTEARSAMDDTGTKRPPKPR) is disordered. Positions 1968–1990 (VPEEEKPSEPPTATPEPPIKPRL) are disordered. The span at 1976-1987 (EPPTATPEPPIK) shows a compositional bias: pro residues. 5 Fibronectin type-III domains span residues 1989–2089 (RLGE…SMEA), 2097–2185 (LLGE…APEE), 2196–2296 (RLGQ…TEPP), 2305–2398 (RLEE…TPSP), and 2408–2502 (PPEE…PQED). The disordered stretch occupies residues 2281–2304 (APGKDEEMAPASTEPPTPEPPIKP). The interval 2495–2542 (GVTAPQEDVDETPSPTEPGTEAPGPPEEPLLGELTVTGSSPDSLSLSW) is disordered. A compositionally biased stretch (low complexity) spans 2506-2516 (TPSPTEPGTEA). 15 consecutive Fibronectin type-III domains span residues 2519–2617 (PPEE…TTQA), 2625–2723 (PPIK…TPSP), 2733–2840 (PPEE…TTPE), 2841–2939 (PPNK…TPAP), 2949–3042 (PPEE…APKD), 3062–3153 (RLGE…TPSP), 3168–3260 (LLGE…TPLP), 3264–3355 (RLGE…TKPS), 3357–3446 (RLGE…PLEK), 3451–3544 (HLGE…TPAP), 3553–3647 (PPEE…LAPA), 3657–3754 (RLSQ…TLSP), 3758–3847 (SPRD…VPDG), 3848–3934 (PTQL…TGLE), and 3935–4025 (APRD…LRIP). Over residues 2530-2542 (VTGSSPDSLSLSW) the composition is skewed to polar residues. Disordered stretches follow at residues 2824–2847 (PEDE…KPRL) and 2933–2969 (EEET…DSLS). Over residues 2937–2946 (PAPTEPSTEA) the composition is skewed to low complexity. A compositionally biased stretch (polar residues) spans 2960 to 2969 (VTGSSPDSLS). 2 disordered regions span residues 3536-3559 (APEE…EPRL) and 3636-3662 (LSAE…SQLS). N-linked (GlcNAc...) asparagine glycosylation is found at Asn-3855, Asn-3908, and Asn-3920. Residues 4021–4236 (GLRIPFPRDC…FTEMKLRPRN (216 aa)) enclose the Fibrinogen C-terminal domain. Cysteines 4030 and 4060 form a disulfide. N-linked (GlcNAc...) asparagine glycosylation occurs at Asn-4095. Cys-4182 and Cys-4195 form a disulfide bridge.

It belongs to the tenascin family. Homotrimer. Interacts with type I, III and V collagens and tropoelastin via its 29th fibronectin type-III domain. In terms of tissue distribution, highly expressed in fetal adrenal, in fetal testis, fetal smooth, striated and cardiac muscle. Isoform XB-short is only expressed in the adrenal gland.

Its subcellular location is the secreted. The protein resides in the extracellular space. It localises to the extracellular matrix. Functionally, appears to mediate interactions between cells and the extracellular matrix. Substrate-adhesion molecule that appears to inhibit cell migration. Accelerates collagen fibril formation. May play a role in supporting the growth of epithelial tumors. This chain is Tenascin-X, found in Homo sapiens (Human).